Reading from the N-terminus, the 550-residue chain is CTP synthase (550 aa).

The interval Met1–Leu267 is amidoligase domain. A CTP-binding site is contributed by Ser14. Ser14 contacts UTP. Residues Ser15–Leu20 and Asp72 each bind ATP. Mg(2+) contacts are provided by Asp72 and Glu141. CTP is bound by residues Asp148–Glu150, Lys188–Gln193, and Lys224. UTP-binding positions include Lys188 to Gln193 and Lys224. The region spanning Thr292–Gly545 is the Glutamine amidotransferase type-1 domain. Gly354 lines the L-glutamine pocket. Cys381 acts as the Nucleophile; for glutamine hydrolysis in catalysis. Residues Leu382 to Gln385, Glu405, and Arg473 each bind L-glutamine. Catalysis depends on residues His518 and Glu520.

This sequence belongs to the CTP synthase family. In terms of assembly, homotetramer.

It carries out the reaction UTP + L-glutamine + ATP + H2O = CTP + L-glutamate + ADP + phosphate + 2 H(+). The enzyme catalyses L-glutamine + H2O = L-glutamate + NH4(+). The catalysed reaction is UTP + NH4(+) + ATP = CTP + ADP + phosphate + 2 H(+). It participates in pyrimidine metabolism; CTP biosynthesis via de novo pathway; CTP from UDP: step 2/2. Allosterically activated by GTP, when glutamine is the substrate; GTP has no effect on the reaction when ammonia is the substrate. The allosteric effector GTP functions by stabilizing the protein conformation that binds the tetrahedral intermediate(s) formed during glutamine hydrolysis. Inhibited by the product CTP, via allosteric rather than competitive inhibition. In terms of biological role, catalyzes the ATP-dependent amination of UTP to CTP with either L-glutamine or ammonia as the source of nitrogen. Regulates intracellular CTP levels through interactions with the four ribonucleotide triphosphates. The sequence is that of CTP synthase from Nitratidesulfovibrio vulgaris (strain DSM 19637 / Miyazaki F) (Desulfovibrio vulgaris).